A 55-amino-acid chain; its full sequence is Large ribosomal subunit protein eL37 (55 aa).

The Zn(2+) site is built by C20, C23, C35, and C38. The C4-type zinc-finger motif lies at 20 to 38; sequence CRRCGKNSYHKRHHRCSSC.

This sequence belongs to the eukaryotic ribosomal protein eL37 family. It depends on Zn(2+) as a cofactor.

Binds to the 23S rRNA. This is Large ribosomal subunit protein eL37 from Cenarchaeum symbiosum (strain A).